Consider the following 195-residue polypeptide: Rubrerythrin (195 aa).

A Ferritin-like diiron domain is found at 1 to 150 (MKSLKGTKTA…KLAKNIEEGK (150 aa)). Fe(3+) is bound by residues glutamate 20, glutamate 53, glutamate 98, glutamate 101, glutamate 132, histidine 135, cysteine 162, cysteine 165, cysteine 178, and cysteine 181. One can recognise a Rubredoxin-like domain in the interval 157-195 (VVLWKCGNCGFIWEGAEAPLKCPACLHPQAYFEVFKETY).

In terms of assembly, homodimer. Possesses two rubredoxin-like centers and two non-sulfur oxo-bridged di-iron centers per dimer. Fe(3+) is required as a cofactor.

It localises to the cytoplasm. Its function is as follows. May provide oxidative stress protection via catalytic reduction of intracellular hydrogen peroxide. This is Rubrerythrin (rbr) from Clostridium perfringens (strain 13 / Type A).